Reading from the N-terminus, the 86-residue chain is Toxin CSTX-20 (86 aa).

In terms of tissue distribution, expressed by the venom gland.

It is found in the secreted. In Cupiennius salei (American wandering spider), this protein is Toxin CSTX-20.